Consider the following 140-residue polypeptide: Phosphoribosyl-AMP cyclohydrolase (140 aa).

Residue aspartate 78 coordinates Mg(2+). Cysteine 79 is a binding site for Zn(2+). Positions 80 and 82 each coordinate Mg(2+). The Zn(2+) site is built by cysteine 96 and cysteine 103.

This sequence belongs to the PRA-CH family. In terms of assembly, homodimer. Requires Mg(2+) as cofactor. Zn(2+) serves as cofactor.

It localises to the cytoplasm. It catalyses the reaction 1-(5-phospho-beta-D-ribosyl)-5'-AMP + H2O = 1-(5-phospho-beta-D-ribosyl)-5-[(5-phospho-beta-D-ribosylamino)methylideneamino]imidazole-4-carboxamide. Its pathway is amino-acid biosynthesis; L-histidine biosynthesis; L-histidine from 5-phospho-alpha-D-ribose 1-diphosphate: step 3/9. In terms of biological role, catalyzes the hydrolysis of the adenine ring of phosphoribosyl-AMP. The chain is Phosphoribosyl-AMP cyclohydrolase from Ralstonia nicotianae (strain ATCC BAA-1114 / GMI1000) (Ralstonia solanacearum).